The chain runs to 104 residues: Protein RnfH (104 aa).

It belongs to the UPF0125 (RnfH) family.

The polypeptide is Protein RnfH (Pseudomonas fluorescens (strain ATCC BAA-477 / NRRL B-23932 / Pf-5)).